Consider the following 111-residue polypeptide: Probable 4-amino-4-deoxy-L-arabinose-phosphoundecaprenol flippase subunit ArnE (111 aa).

Transmembrane regions (helical) follow at residues 37 to 57 (LIWL…WLKL), 65 to 85 (QAYP…HFFF), and 91 to 111 (LQHW…GQGI).

Belongs to the ArnE family. Heterodimer of ArnE and ArnF.

It is found in the cell inner membrane. Its pathway is bacterial outer membrane biogenesis; lipopolysaccharide biosynthesis. Functionally, translocates 4-amino-4-deoxy-L-arabinose-phosphoundecaprenol (alpha-L-Ara4N-phosphoundecaprenol) from the cytoplasmic to the periplasmic side of the inner membrane. This Hamiltonella defensa subsp. Acyrthosiphon pisum (strain 5AT) protein is Probable 4-amino-4-deoxy-L-arabinose-phosphoundecaprenol flippase subunit ArnE.